The sequence spans 433 residues: Putative wall-associated receptor kinase-like 16 (433 aa).

The signal sequence occupies residues 1–22; it reads MKLQHVVYLVAIFFVVAIFVIA. Residues 23-29 lie on the Extracellular side of the membrane; it reads CIEENKY. Residues 30 to 50 form a helical membrane-spanning segment; it reads LVWIMIILANTTNILSLVRSI. The Cytoplasmic portion of the chain corresponds to 51–433; the sequence is SYIKNIRKHQ…VARFDIEAGR (383 aa). Threonine 97 carries the post-translational modification Phosphothreonine. Residues 108-391 enclose the Protein kinase domain; sequence YDVSRILGQG…RAKTTKHNWL (284 aa). Residues 114–122 and lysine 136 each bind ATP; that span reads LGQGGQWTV. Tyrosine 181 carries the phosphotyrosine modification. Residue aspartate 233 is the Proton acceptor of the active site. Phosphothreonine occurs at positions 267 and 272. Tyrosine 280 is modified (phosphotyrosine).

This sequence belongs to the protein kinase superfamily. Ser/Thr protein kinase family.

It is found in the membrane. It carries out the reaction L-seryl-[protein] + ATP = O-phospho-L-seryl-[protein] + ADP + H(+). The enzyme catalyses L-threonyl-[protein] + ATP = O-phospho-L-threonyl-[protein] + ADP + H(+). Functionally, putative serine/threonine-protein kinase that may function as a signaling receptor of extracellular matrix component. The sequence is that of Putative wall-associated receptor kinase-like 16 (WAKL16) from Arabidopsis thaliana (Mouse-ear cress).